Consider the following 434-residue polypeptide: Histidinol dehydrogenase (434 aa).

Tyr-130, Gln-188, and Asn-211 together coordinate NAD(+). Residues Ser-237, Gln-259, and His-262 each contribute to the substrate site. Zn(2+) contacts are provided by Gln-259 and His-262. Active-site proton acceptor residues include Glu-326 and His-327. Positions 327, 360, 414, and 419 each coordinate substrate. Asp-360 lines the Zn(2+) pocket. His-419 contacts Zn(2+).

This sequence belongs to the histidinol dehydrogenase family. As to quaternary structure, homodimer. Zn(2+) serves as cofactor.

The catalysed reaction is L-histidinol + 2 NAD(+) + H2O = L-histidine + 2 NADH + 3 H(+). The protein operates within amino-acid biosynthesis; L-histidine biosynthesis; L-histidine from 5-phospho-alpha-D-ribose 1-diphosphate: step 9/9. Catalyzes the sequential NAD-dependent oxidations of L-histidinol to L-histidinaldehyde and then to L-histidine. This chain is Histidinol dehydrogenase, found in Salmonella paratyphi A (strain ATCC 9150 / SARB42).